Consider the following 214-residue polypeptide: Intermembrane phospholipid transport system binding protein MlaC (214 aa).

An N-terminal signal peptide occupies residues 1 to 28 (MNLIQLKKWFTILTFVLTAFLVTRTAIA).

This sequence belongs to the MlaC/ttg2D family.

Its subcellular location is the periplasm. Functionally, involved in a phospholipid transport pathway that maintains lipid asymmetry in the outer membrane by retrograde trafficking of phospholipids from the outer membrane to the inner membrane. May transfer phospholipid across the periplasmic space and deliver it to the MlaFEDB complex at the inner membrane. The protein is Intermembrane phospholipid transport system binding protein MlaC of Haemophilus influenzae (strain ATCC 51907 / DSM 11121 / KW20 / Rd).